The primary structure comprises 448 residues: Histidine--tRNA ligase (448 aa).

Disordered regions lie at residues 1–20 (MAIKRPKGTQDHLPDGSPKL) and 428–448 (AGQADQHSPAIPHDPTPQEKA).

The protein belongs to the class-II aminoacyl-tRNA synthetase family. In terms of assembly, homodimer.

It is found in the cytoplasm. It carries out the reaction tRNA(His) + L-histidine + ATP = L-histidyl-tRNA(His) + AMP + diphosphate + H(+). The sequence is that of Histidine--tRNA ligase from Deinococcus deserti (strain DSM 17065 / CIP 109153 / LMG 22923 / VCD115).